Here is a 401-residue protein sequence, read N- to C-terminus: Probable tRNA sulfurtransferase (401 aa).

The 106-residue stretch at 60–165 folds into the THUMP domain; that stretch reads EEICSLLKNI…EEATFLTIRN (106 aa). Residues 183-184, 208-209, arginine 265, glycine 287, and glutamine 296 contribute to the ATP site; these read ML and HF.

It belongs to the ThiI family.

The protein localises to the cytoplasm. The enzyme catalyses [ThiI sulfur-carrier protein]-S-sulfanyl-L-cysteine + a uridine in tRNA + 2 reduced [2Fe-2S]-[ferredoxin] + ATP + H(+) = [ThiI sulfur-carrier protein]-L-cysteine + a 4-thiouridine in tRNA + 2 oxidized [2Fe-2S]-[ferredoxin] + AMP + diphosphate. The catalysed reaction is [ThiS sulfur-carrier protein]-C-terminal Gly-Gly-AMP + S-sulfanyl-L-cysteinyl-[cysteine desulfurase] + AH2 = [ThiS sulfur-carrier protein]-C-terminal-Gly-aminoethanethioate + L-cysteinyl-[cysteine desulfurase] + A + AMP + 2 H(+). It functions in the pathway cofactor biosynthesis; thiamine diphosphate biosynthesis. Catalyzes the ATP-dependent transfer of a sulfur to tRNA to produce 4-thiouridine in position 8 of tRNAs, which functions as a near-UV photosensor. Also catalyzes the transfer of sulfur to the sulfur carrier protein ThiS, forming ThiS-thiocarboxylate. This is a step in the synthesis of thiazole, in the thiamine biosynthesis pathway. The sulfur is donated as persulfide by IscS. The protein is Probable tRNA sulfurtransferase of Bacillus velezensis (strain DSM 23117 / BGSC 10A6 / LMG 26770 / FZB42) (Bacillus amyloliquefaciens subsp. plantarum).